We begin with the raw amino-acid sequence, 65 residues long: Defensin Cg-Defm (65 aa).

The N-terminal stretch at 1–22 is a signal peptide; it reads MKVFVLLTLAVLLMVSADMAFA. Positions 24, 25, and 26 each coordinate beta-D-GlcNAc-(1-&gt;4)-Mur2Ac(oyl-L-Ala-gamma-D-Glu-L-Lys-D-Ala-D-Ala)-di-trans,octa-cis-undecaprenyl diphosphate. Intrachain disulfides connect C26-C47, C33-C56, C37-C58, and C42-C61. Residues 27–30 are binds to membrane interface; it reads PGNQ. A beta-D-GlcNAc-(1-&gt;4)-Mur2Ac(oyl-L-Ala-gamma-D-Glu-L-Lys-D-Ala-D-Ala)-di-trans,octa-cis-undecaprenyl diphosphate-binding site is contributed by H36. The segment at 48–54 is binds to membrane interface; sequence DAATLWL. C56 is a beta-D-GlcNAc-(1-&gt;4)-Mur2Ac(oyl-L-Ala-gamma-D-Glu-L-Lys-D-Ala-D-Ala)-di-trans,octa-cis-undecaprenyl diphosphate binding site.

It belongs to the invertebrate defensin family. Expressed in the mantle. Low or no expression in most of the organs analyzed, including hemocytes, heart, digestive gland, and gills.

Its subcellular location is the secreted. The protein resides in the target cell membrane. Antibacterial peptide mostly active against Gram-positive bacteria (M.lysodeikticus, S.aureus, and the marine bacteria, B.stationis, and M.maritypicum). It acts by selectively inhibiting peptidoglycan biosynthesis through complex formation with the cell wall precursor lipid II (1:1 molar ratio) thus inhibiting cell wall synthesis. It does not disrupt cell membranes. Is noticeably more potent than Cg-Defh1. It shows no or limited activities against Gram-negative bacteria and filamentous fungi. The protein is Defensin Cg-Defm of Magallana gigas (Pacific oyster).